Here is a 95-residue protein sequence, read N- to C-terminus: Protein TusB (95 aa).

The protein belongs to the DsrH/TusB family. As to quaternary structure, heterohexamer, formed by a dimer of trimers. The hexameric TusBCD complex contains 2 copies each of TusB, TusC and TusD. The TusBCD complex interacts with TusE.

It localises to the cytoplasm. Functionally, part of a sulfur-relay system required for 2-thiolation of 5-methylaminomethyl-2-thiouridine (mnm(5)s(2)U) at tRNA wobble positions. The polypeptide is Protein TusB (Salmonella dublin (strain CT_02021853)).